Here is a 223-residue protein sequence, read N- to C-terminus: Putative N-acetylmannosamine-6-phosphate 2-epimerase (223 aa).

This sequence belongs to the NanE family.

It catalyses the reaction an N-acyl-D-glucosamine 6-phosphate = an N-acyl-D-mannosamine 6-phosphate. It participates in amino-sugar metabolism; N-acetylneuraminate degradation; D-fructose 6-phosphate from N-acetylneuraminate: step 3/5. Converts N-acetylmannosamine-6-phosphate (ManNAc-6-P) to N-acetylglucosamine-6-phosphate (GlcNAc-6-P). This Clostridioides difficile (strain 630) (Peptoclostridium difficile) protein is Putative N-acetylmannosamine-6-phosphate 2-epimerase.